A 441-amino-acid polypeptide reads, in one-letter code: Methylenetetrahydrofolate--tRNA-(uracil-5-)-methyltransferase TrmFO (441 aa).

10-15 is a binding site for FAD; the sequence is GAGLAG.

Belongs to the MnmG family. TrmFO subfamily. FAD is required as a cofactor.

The protein localises to the cytoplasm. The catalysed reaction is uridine(54) in tRNA + (6R)-5,10-methylene-5,6,7,8-tetrahydrofolate + NADH + H(+) = 5-methyluridine(54) in tRNA + (6S)-5,6,7,8-tetrahydrofolate + NAD(+). It catalyses the reaction uridine(54) in tRNA + (6R)-5,10-methylene-5,6,7,8-tetrahydrofolate + NADPH + H(+) = 5-methyluridine(54) in tRNA + (6S)-5,6,7,8-tetrahydrofolate + NADP(+). Its function is as follows. Catalyzes the folate-dependent formation of 5-methyl-uridine at position 54 (M-5-U54) in all tRNAs. The sequence is that of Methylenetetrahydrofolate--tRNA-(uracil-5-)-methyltransferase TrmFO from Desulforamulus reducens (strain ATCC BAA-1160 / DSM 100696 / MI-1) (Desulfotomaculum reducens).